We begin with the raw amino-acid sequence, 378 residues long: Spermatogenic leucine zipper protein 1 (378 aa).

A disordered region spans residues 1–31 (MSDTDNSAEMPARCPSPNPAPGAKQEPPNSG). The residue at position 106 (Ser106) is a Phosphoserine. An interaction with PPP1CC isoform gamma-2 region spans residues 116 to 122 (KNKIRFK). Positions 116–127 (KNKIRFKDDLFI) are helix-loop-helix motif. A basic motif region spans residues 128–193 (HFDPEREQNT…HLRGEYRKLR (66 aa)). Residues 182 to 233 (SLHLRGEYRKLRNNMEQLLQEADHWSKQHNELSELMRSYQECQNETQETTDK) adopt a coiled-coil conformation. Phosphoserine is present on Ser207. Positions 252–273 (LEEQVKKLSHDTHALHLIAALL) are leucine-zipper.

Interacts with PPP1CC isoform gamma-2. This interaction can prevent SPZ1 binding to the E-box and inhibits PPP1CC activity. In terms of processing, phosphorylated by MAPK1/ERK2 and MAPK3/ERK1. In terms of tissue distribution, expressed specifically in the testis and epidydimis. In the testis expressed in both germ cells and somatic cells (Sertoli and Leydig cells). Expressed in several tumor cell lines.

Its subcellular location is the cytoplasm. It is found in the nucleus. Its function is as follows. Transcription factor that binds to the DNA sequence 5'-CANNTG-3'(E box) and the G-box motif. Directly binds to a guanine-rich region of the PCNA promoter and up-regulates its expression which in turn induces cell transformation and tumor formation. May play an important role in the regulation of cell proliferation and differentiation during spermatogenesis. In Mus musculus (Mouse), this protein is Spermatogenic leucine zipper protein 1 (Spz1).